Here is a 118-residue protein sequence, read N- to C-terminus: MRHRVKKKHFSRTAEQRVALMRSLARSLILFEKIESSEAKLKALRPFVERLITLAKKGDLASRRRALSLLPDKEAIRKLFTELAPRFEGRNGGYTRIVKLPNRKPGDSTELAIIEFVE.

This sequence belongs to the bacterial ribosomal protein bL17 family. In terms of assembly, part of the 50S ribosomal subunit. Contacts protein L32.

This is Large ribosomal subunit protein bL17 from Hydrogenobaculum sp. (strain Y04AAS1).